Consider the following 131-residue polypeptide: UPF0146 protein PYRAB01940 (131 aa).

This sequence belongs to the UPF0146 family.

In Pyrococcus abyssi (strain GE5 / Orsay), this protein is UPF0146 protein PYRAB01940.